The following is an 87-amino-acid chain: Beta-toxin Ct1a (87 aa).

The first 19 residues, 1–19, serve as a signal peptide directing secretion; sequence MNSLLMITACLALIGTVWA. The 66-residue stretch at 20 to 85 folds into the LCN-type CS-alpha/beta domain; sequence KEGYLVNHST…VWPLPKKTCN (66 aa). Cystine bridges form between Cys31/Cys84, Cys35/Cys60, Cys44/Cys65, and Cys48/Cys67. Asn85 bears the Asparagine amide mark.

It belongs to the long (4 C-C) scorpion toxin superfamily. Sodium channel inhibitor family. Beta subfamily. In terms of tissue distribution, expressed by the venom gland.

The protein localises to the secreted. In terms of biological role, beta toxins bind voltage-independently at site-4 of sodium channels (Nav) and shift the voltage of activation toward more negative potentials thereby affecting sodium channel activation and promoting spontaneous and repetitive firing. Is lethal to mice but does not show toxicity to freshwater shrimp and crickets. The protein is Beta-toxin Ct1a of Centruroides tecomanus (Scorpion).